Consider the following 579-residue polypeptide: CTP synthase (579 aa).

The tract at residues 1–281 (MPALRKHPQT…DAYVVRRLNL (281 aa)) is amidoligase domain. Ser23 contacts CTP. Residue Ser23 participates in UTP binding. Residues 24 to 29 (SLGKGL) and Asp81 each bind ATP. The Mg(2+) site is built by Asp81 and Glu155. Residues 162-164 (DIE), 202-207 (KTKPTQ), and Lys238 contribute to the CTP site. UTP contacts are provided by residues 202 to 207 (KTKPTQ) and Lys238. The 249-residue stretch at 306–554 (RIALVGKYID…IGAALDYKAA (249 aa)) folds into the Glutamine amidotransferase type-1 domain. Gly369 lines the L-glutamine pocket. Cys396 serves as the catalytic Nucleophile; for glutamine hydrolysis. L-glutamine-binding positions include 397–400 (LGLQ), Glu419, and Arg480. Catalysis depends on residues His527 and Glu529.

Belongs to the CTP synthase family. In terms of assembly, homotetramer.

The enzyme catalyses UTP + L-glutamine + ATP + H2O = CTP + L-glutamate + ADP + phosphate + 2 H(+). It carries out the reaction L-glutamine + H2O = L-glutamate + NH4(+). It catalyses the reaction UTP + NH4(+) + ATP = CTP + ADP + phosphate + 2 H(+). Its pathway is pyrimidine metabolism; CTP biosynthesis via de novo pathway; CTP from UDP: step 2/2. Its activity is regulated as follows. Allosterically activated by GTP, when glutamine is the substrate; GTP has no effect on the reaction when ammonia is the substrate. The allosteric effector GTP functions by stabilizing the protein conformation that binds the tetrahedral intermediate(s) formed during glutamine hydrolysis. Inhibited by the product CTP, via allosteric rather than competitive inhibition. Catalyzes the ATP-dependent amination of UTP to CTP with either L-glutamine or ammonia as the source of nitrogen. Regulates intracellular CTP levels through interactions with the four ribonucleotide triphosphates. This Mycobacterium sp. (strain JLS) protein is CTP synthase.